Consider the following 176-residue polypeptide: Ribosome maturation factor RimM (176 aa).

Residues 100-173 enclose the PRC barrel domain; it reads EGEFHLLDLV…WLRLTPPPGL (74 aa).

The protein belongs to the RimM family. As to quaternary structure, binds ribosomal protein uS19.

It localises to the cytoplasm. Its function is as follows. An accessory protein needed during the final step in the assembly of 30S ribosomal subunit, possibly for assembly of the head region. Essential for efficient processing of 16S rRNA. May be needed both before and after RbfA during the maturation of 16S rRNA. It has affinity for free ribosomal 30S subunits but not for 70S ribosomes. In Prochlorococcus marinus (strain MIT 9303), this protein is Ribosome maturation factor RimM.